We begin with the raw amino-acid sequence, 442 residues long: CAAX prenyl protease 1 homolog (442 aa).

Residues 1–62 (MDASCLFKAL…KARDYKIDNH (62 aa)) are Lumenal-facing. Residues 63-83 (LFGFFHSWFNQLLLTAQLIGG) traverse the membrane as a helical segment. Position 84 (Y84) is a topological domain, cytoplasmic. A helical membrane pass occupies residues 85–105 (YPFLWYATASYPLHVAVFLSI). Residues 106–146 (NSIIETIIDLPWDLYSTFIIEDAHGFNKQTIGFYFVDKIKK) lie on the Lumenal side of the membrane. A helical membrane pass occupies residues 147–167 (MLVGFALTMPIVYGIEWIIVN). At 168 to 170 (GGP) the chain is on the cytoplasmic side. A helical transmembrane segment spans residues 171–191 (YFFVYIWLFVSVVVLLLMTIY). Residues 192 to 311 (PTFIAPLFDK…ELGHWALWHT (120 aa)) are Lumenal-facing. H301 is a binding site for Zn(2+). E302 is an active-site residue. H305 is a Zn(2+) binding site. The chain crosses the membrane as a helical span at residues 312–332 (LINLVITEVNLFFSFAVFGYF). Over 333-349 (YKWEALYQGFGYHDTPP) the chain is Cytoplasmic. The helical transmembrane segment at 350–370 (VIGMMLIFQFVLALYNQLASI) threads the bilayer. At 371-442 (GMVIHSRSAE…AVRAFQAKNK (72 aa)) the chain is on the lumenal side. E380 serves as a coordination point for Zn(2+). D384 functions as the Proton donor in the catalytic mechanism.

The protein belongs to the peptidase M48A family. Zn(2+) serves as cofactor.

It localises to the endoplasmic reticulum membrane. It is found in the membrane. The catalysed reaction is Hydrolyzes the peptide bond -P2-(S-farnesyl or geranylgeranyl)C-P1'-P2'-P3'-COOH where P1' and P2' are amino acids with aliphatic side chains and P3' is any C-terminal residue.. Functionally, proteolytically removes the C-terminal three residues of farnesylated proteins. The chain is CAAX prenyl protease 1 homolog from Caenorhabditis elegans.